A 111-amino-acid polypeptide reads, in one-letter code: Universal stress protein B (111 aa).

2 helical membrane passes run Met1 to Arg21 and Phe90 to Trp110.

It belongs to the universal stress protein B family.

The protein localises to the cell inner membrane. This is Universal stress protein B from Erwinia tasmaniensis (strain DSM 17950 / CFBP 7177 / CIP 109463 / NCPPB 4357 / Et1/99).